Here is a 457-residue protein sequence, read N- to C-terminus: Multidrug resistance protein MdtK (457 aa).

12 consecutive transmembrane segments (helical) span residues Leu11 to Val31, Ile53 to Ala73, Trp93 to Ile113, Ala127 to Leu147, Gly160 to Tyr180, Leu188 to Met208, Leu243 to Ile263, Phe280 to Gly300, Tyr316 to Leu336, Leu357 to Val377, Ile387 to Gly407, and Pro418 to Ala438.

Belongs to the multi antimicrobial extrusion (MATE) (TC 2.A.66.1) family. MdtK subfamily.

Its subcellular location is the cell inner membrane. Multidrug efflux pump that functions probably as a Na(+)/drug antiporter. The polypeptide is Multidrug resistance protein MdtK (Photorhabdus laumondii subsp. laumondii (strain DSM 15139 / CIP 105565 / TT01) (Photorhabdus luminescens subsp. laumondii)).